A 323-amino-acid chain; its full sequence is MSNLKQLRTRIKSVKSTQKITKAMQLVSASKMAKIKSQIANSNFYIEAVSKMMSAILSIDIYELSIEEQKFFNTVPNKANLLIVMTSQRGLCGTFNYSIIKQVKNDIKELENKGEQIKLIIIGKKGYEALKRQYVNYIDSYFELPKIHDENLMLQVKQKIMSAVENLEVSNCVIYFNKFKNAMTQIMTRQQILPVAKYQDHSMIDNPIVNLVGFGYKERGAKPINNRRATSDIVGESKSIDYNYEYEGENLISNLINLYVNSQINYALLQSRASEEGARMTAMENATNNANDLISKLVLKLNRSRQAIITTELIEIIAGSEAV.

The protein belongs to the ATPase gamma chain family. In terms of assembly, F-type ATPases have 2 components, CF(1) - the catalytic core - and CF(0) - the membrane proton channel. CF(1) has five subunits: alpha(3), beta(3), gamma(1), delta(1), epsilon(1). CF(0) has three main subunits: a, b and c.

Its subcellular location is the cell inner membrane. Its function is as follows. Produces ATP from ADP in the presence of a proton gradient across the membrane. The gamma chain is believed to be important in regulating ATPase activity and the flow of protons through the CF(0) complex. This chain is ATP synthase gamma chain, found in Rickettsia peacockii (strain Rustic).